A 205-amino-acid polypeptide reads, in one-letter code: Imidazole glycerol phosphate synthase subunit HisH (205 aa).

Residues 3 to 205 (KIGLIDYGMG…LLRRWIKSIQ (203 aa)) enclose the Glutamine amidotransferase type-1 domain. The active-site Nucleophile is the Cys-81. Residues His-185 and Glu-187 contribute to the active site.

Heterodimer of HisH and HisF.

It is found in the cytoplasm. The catalysed reaction is 5-[(5-phospho-1-deoxy-D-ribulos-1-ylimino)methylamino]-1-(5-phospho-beta-D-ribosyl)imidazole-4-carboxamide + L-glutamine = D-erythro-1-(imidazol-4-yl)glycerol 3-phosphate + 5-amino-1-(5-phospho-beta-D-ribosyl)imidazole-4-carboxamide + L-glutamate + H(+). The enzyme catalyses L-glutamine + H2O = L-glutamate + NH4(+). Its pathway is amino-acid biosynthesis; L-histidine biosynthesis; L-histidine from 5-phospho-alpha-D-ribose 1-diphosphate: step 5/9. IGPS catalyzes the conversion of PRFAR and glutamine to IGP, AICAR and glutamate. The HisH subunit catalyzes the hydrolysis of glutamine to glutamate and ammonia as part of the synthesis of IGP and AICAR. The resulting ammonia molecule is channeled to the active site of HisF. The chain is Imidazole glycerol phosphate synthase subunit HisH from Prochlorococcus marinus subsp. pastoris (strain CCMP1986 / NIES-2087 / MED4).